The chain runs to 564 residues: Copine-8 (564 aa).

2 C2 domains span residues 1–133 (MDSR…RLEK) and 142–265 (KCGT…FNVY). The Ca(2+) site is built by D39, D45, D99, D101, S104, K109, D111, D173, D179, D235, D237, and D243. At S260 the chain carries Phosphoserine. Residues 309 to 510 (NFTVAIDFTA…VQFVPFRDYI (202 aa)) form the VWFA domain.

It belongs to the copine family. The cofactor is Ca(2+).

Its function is as follows. Probable calcium-dependent phospholipid-binding protein that may play a role in calcium-mediated intracellular processes. This is Copine-8 from Homo sapiens (Human).